The following is a 466-amino-acid chain: UDP-N-acetylmuramoylalanine--D-glutamate ligase (466 aa).

An ATP-binding site is contributed by 139–145 (GTAGKGG).

It belongs to the MurCDEF family.

Its subcellular location is the cytoplasm. It carries out the reaction UDP-N-acetyl-alpha-D-muramoyl-L-alanine + D-glutamate + ATP = UDP-N-acetyl-alpha-D-muramoyl-L-alanyl-D-glutamate + ADP + phosphate + H(+). It participates in cell wall biogenesis; peptidoglycan biosynthesis. Functionally, cell wall formation. Catalyzes the addition of glutamate to the nucleotide precursor UDP-N-acetylmuramoyl-L-alanine (UMA). This is UDP-N-acetylmuramoylalanine--D-glutamate ligase from Deinococcus geothermalis (strain DSM 11300 / CIP 105573 / AG-3a).